The following is a 993-amino-acid chain: MINKAIAKIFGTQNEREIKRLMPIVAQINALEPQVKQFSDDQLRAKTDEFRAKIQERLAKYEEAEHKNHALKEVLDEILPEAFAICREAGWRVLNMRHFDVQLIGGMVLHSGRISEMKTGEGKTLVATLPVYLNALSGRGVHVVTVNDYLAKRDSEWMGKLYNFLGLSVGVIVHDLDDDQRREAYRADVTYGTNNEFGFDYLRDNMKFELSDCVQREFNFAIVDEVDSILIDEARTPLIISGASEESTDKYQRVNVIIPRLEKGEEIEGREPGDKILTGDYVVDEKHKTITVSDDGWEKVEKLLGIGNIADPENWDLKHHVEVAIKAHALYHVDVEYVVKDGEVLIVDEFTGRLMPGRRWSDGLHQAVEAKEGVKVERENQTLATITFQNYFRLYKKLAGMTGTAETEAAEFDKIYKLEVVVIPTNRTLLRKENPDVVYRTEKEKFFAVADEIAKLSVSQQPVLVGTVSIEKSERLSELLKRKNIKHVVLNAKFHEREAEYVAQAGRLGQVTIATNMAGRGTDILLGGNPEFMAKQETLKKGVAQPVHAAGGEVDARPDDPNTVYWYYAGNEYVCPRAQWEEILAHYKTQTDFEHEQVKQAGGLFILGTERHESRRIDNQLRGRAGRQGDPGASRFYLSLEDDLMRIFAKEWVSTLLQRLGMEEGVPIESKMISRRIEKAQEAVEAQNFEARKHLLEYDDVMNKQRMAVYGLRRQLLEGLDQKELIIDEYVTEILGDLLDKFAPTEKHPEDWDIAGLKGEIFTRFGVDIIAEGVEPEKLNRMQLGDGIFDKLKERYEAKEQLIGNDQMRHHERVIMLSVIDQLWKDHLLNMDHLKEGIGLRGYAQHDPLVEYKRESFDMFEGMMATFKEQTVRYLYLMQIIDAATNMPVEIPRRRAPENVRELGPVLEAENAPEPQISGGNGQQPPQRRQQTSLDDLEKQFERKKKRELEQARMAGGGMPDAVQQVVRSGDKIGRNDPCFCGSGKKYKKCHGA.

Residues glutamine 102, 120 to 124 (GEGKT), and aspartate 523 each bind ATP. The interval 910–962 (ENAPEPQISGGNGQQPPQRRQQTSLDDLEKQFERKKKRELEQARMAGGGMPDA) is disordered. The span at 936–951 (DLEKQFERKKKRELEQ) shows a compositional bias: basic and acidic residues. Zn(2+) contacts are provided by cysteine 979, cysteine 981, cysteine 990, and histidine 991.

This sequence belongs to the SecA family. Monomer and homodimer. Part of the essential Sec protein translocation apparatus which comprises SecA, SecYEG and auxiliary proteins SecDF. Other proteins may also be involved. The cofactor is Zn(2+).

Its subcellular location is the cell inner membrane. The protein localises to the cytoplasm. It carries out the reaction ATP + H2O + cellular proteinSide 1 = ADP + phosphate + cellular proteinSide 2.. In terms of biological role, part of the Sec protein translocase complex. Interacts with the SecYEG preprotein conducting channel. Has a central role in coupling the hydrolysis of ATP to the transfer of proteins into and across the cell membrane, serving as an ATP-driven molecular motor driving the stepwise translocation of polypeptide chains across the membrane. This is Protein translocase subunit SecA from Koribacter versatilis (strain Ellin345).